The sequence spans 150 residues: UPF0756 membrane protein PM0771 (150 aa).

4 helical membrane-spanning segments follow: residues 12-34 (LVVL…AAIL), 52-72 (HGIT…IVSG), 79-99 (LAVF…LVAW), and 123-143 (ILGV…AGIL).

Belongs to the UPF0756 family.

The protein localises to the cell membrane. The sequence is that of UPF0756 membrane protein PM0771 from Pasteurella multocida (strain Pm70).